Here is a 249-residue protein sequence, read N- to C-terminus: T-cell immunoreceptor with Ig and ITIM domains (249 aa).

The signal sequence occupies residues 1–28 (MHGWLLLVWVQGLIQAAFLATAIGATAG). An Ig-like V-type domain is found at 29-127 (TIDTKRNISA…GGIYKGRIFL (99 aa)). Residues 29–148 (TIDTKRNISA…LAQFQTAPLG (120 aa)) are Extracellular-facing. The tract at residues 35-45 (NISAEEGGSVI) is homodimerization. C48 and C111 are disulfide-bonded. The N-linked (GlcNAc...) asparagine glycan is linked to N104. A helical membrane pass occupies residues 149-169 (GTMAAVLGLICLMVTGVTVLA). Residues 170–249 (RKDKSIRMHS…ESFIAVSKTG (80 aa)) are Cytoplasmic-facing. Residues 182–222 (SGLGRTEAEPQEWNLRSLSSPGSPVQTQTAPAGPCGEQAED) form a disordered region. A compositionally biased stretch (polar residues) spans 195 to 211 (NLRSLSSPGSPVQTQTA). The ITIM motif signature appears at 234-239 (LSYRSL).

Homodimer in cis; binds with high affinity to PVR, forming a heterotetrameric assembly of two TIGIT and two PVR molecules. Binds with lower affinity to NECTIN2 and NECTIN3. Interacts with GRB2. Interacts with NECTIN4.

The protein localises to the cell membrane. In terms of biological role, inhibitory receptor that plays a role in the modulation of immune responses. Suppresses T-cell activation by promoting the generation of mature immunoregulatory dendritic cells. Upon binding to its ligands PVR/CD155 or NECTIN2/CD112, which are expressed on antigen-presenting cells, sends inhibitory signals to the T-cell or NK cell. Mechanistically, interaction with ligand leads to phosphorylation of the cytoplasmic tail by Src family tyrosine kinases such as FYN or LCK, allowing subsequent binding to adapter GRB2 and SHIP1/INPP5D. In turn, inhibits PI3K and MAPK signaling cascades. In addition, associates with beta-arrestin-2/ARRB2 to recruit SHIP1/INPP5D that suppresses autoubiquitination of TRAF6 and subsequently inhibits NF-kappa-B signaling pathway. Also acts as a receptor for NECTIN4 to inhibit NK cell cytotoxicity. The sequence is that of T-cell immunoreceptor with Ig and ITIM domains from Mus musculus (Mouse).